The following is a 537-amino-acid chain: Protein swallow (537 aa).

A disordered region spans residues Gln344–Asp406. 2 stretches are compositionally biased toward low complexity: residues Asn371 to Ser383 and Ala392 to Asp406.

In terms of assembly, may be constituted of a homo- or heterodimer.

It localises to the nucleus. Has a role in localizing bicoid mRNA at the anterior margin of the oocyte during oogenesis, and a poorly characterized role in nuclear divisions in early embryogenesis. The chain is Protein swallow (swa) from Drosophila pseudoobscura pseudoobscura (Fruit fly).